The chain runs to 252 residues: Mediator of RNA polymerase II transcription subunit 4 (252 aa).

Residues 70 to 112 (KIHQEMQVLEKEVEKRDSDIQQLQKQLKEAEHILATAVYQAKE) adopt a coiled-coil conformation. Residues 218–252 (HSNEFLMESLGPNKENEEDVEVMSTDSSSSSSDSD) are disordered. Residues 241-252 (STDSSSSSSDSD) show a composition bias toward low complexity.

This sequence belongs to the Mediator complex subunit 4 family. Component of the Mediator complex.

It localises to the nucleus. Component of the Mediator complex, a coactivator involved in the regulated transcription of nearly all RNA polymerase II-dependent genes. Mediator functions as a bridge to convey information from gene-specific regulatory proteins to the basal RNA polymerase II transcription machinery. Mediator is recruited to promoters by direct interactions with regulatory proteins and serves as a scaffold for the assembly of a functional preinitiation complex with RNA polymerase II and the general transcription factors. The polypeptide is Mediator of RNA polymerase II transcription subunit 4 (med4) (Xenopus tropicalis (Western clawed frog)).